The chain runs to 114 residues: Lymphotactin (114 aa).

A signal peptide spans 1–21 (MRLLILALLGICSLTAYIVEG). A disulfide bond links Cys-32 and Cys-69. The interval 91 to 114 (RNNMIQTKPTGTQQSTNTAVTLTG) is disordered.

It belongs to the intercrine gamma family. Highest level in spleen, lower in peripheral leukocytes and very low levels in lung, colon and small intestine.

Its subcellular location is the secreted. Its function is as follows. Chemotactic activity for lymphocytes but not for monocytes or neutrophils. In thymus, mediates medullary accumulation of thymic dendritic cells and contributes to regulatoy T cell development, playing a role in self-tolerance establishment. The polypeptide is Lymphotactin (XCL1) (Homo sapiens (Human)).